We begin with the raw amino-acid sequence, 602 residues long: Elongation factor 4 (602 aa).

Positions 2-184 constitute a tr-type G domain; sequence DHIRNFSIIA…AVIARMPPPK (183 aa). GTP-binding positions include 14–19 and 131–134; these read DHGKST and NKMD.

The protein belongs to the TRAFAC class translation factor GTPase superfamily. Classic translation factor GTPase family. LepA subfamily.

It localises to the cell inner membrane. It catalyses the reaction GTP + H2O = GDP + phosphate + H(+). Required for accurate and efficient protein synthesis under certain stress conditions. May act as a fidelity factor of the translation reaction, by catalyzing a one-codon backward translocation of tRNAs on improperly translocated ribosomes. Back-translocation proceeds from a post-translocation (POST) complex to a pre-translocation (PRE) complex, thus giving elongation factor G a second chance to translocate the tRNAs correctly. Binds to ribosomes in a GTP-dependent manner. The polypeptide is Elongation factor 4 (Leptothrix cholodnii (strain ATCC 51168 / LMG 8142 / SP-6) (Leptothrix discophora (strain SP-6))).